The following is a 317-amino-acid chain: Proline iminopeptidase (317 aa).

An AB hydrolase-1 domain is found at 41–296 (VFIHGGPGGG…ELHIVEGAGH (256 aa)). The active-site Nucleophile is the Ser113. Residue Asp268 is part of the active site. The Proton donor role is filled by His296.

This sequence belongs to the peptidase S33 family. Monomer.

The protein localises to the cytoplasm. It catalyses the reaction Release of N-terminal proline from a peptide.. Specifically catalyzes the removal of N-terminal proline residues from peptides. The polypeptide is Proline iminopeptidase (pip) (Serratia marcescens).